A 399-amino-acid polypeptide reads, in one-letter code: uncharacterized protein (399 aa).

9 helical membrane-spanning segments follow: residues I46 to V66, T76 to M95, G139 to A159, I181 to F201, L226 to F246, I262 to W282, V303 to M323, I330 to F350, and G352 to H372.

It belongs to the CDP-alcohol phosphatidyltransferase class-I family.

Its subcellular location is the membrane. This is an uncharacterized protein from Dictyostelium discoideum (Social amoeba).